Consider the following 959-residue polypeptide: Ataxin-2 homolog (959 aa).

The 80-residue stretch at 13–92 (DVLSAINDMI…IVDFAYVTQE (80 aa)) folds into the Sm domain. Disordered regions lie at residues 203–378 (AREI…GSRV), 392–484 (TAPK…SVIT), 501–528 (PRVA…HPAM), 697–831 (PPQG…QHIQ), and 867–959 (PMQQ…QSPP). The segment covering 226–235 (DLDKITRQED) has biased composition (basic and acidic residues). Residues 246-260 (NNSFNQQQQQRRNPN) are compositionally biased toward low complexity. Residues 270-281 (RRAEGLRGDRRN) show a composition bias toward basic and acidic residues. Low complexity predominate over residues 282 to 313 (SGSSSANNSRYGAPAAAQQNYSQNQQQQQGQK). Polar residues-rich tracts occupy residues 341–356 (RQQQ…NNNV) and 473–484 (VSVTSENDSVIT). Low complexity-rich tracts occupy residues 504-528 (APAT…HPAM), 697-707 (PPQGQQQQPRY), and 715-725 (QQQQQQPQQQQ). Composition is skewed to polar residues over residues 726–742 (FSGE…SQPT) and 756–765 (APQNGNMQAE). Residues 766–788 (SSSNASHSGSTSSQSGQRSGSPP) are compositionally biased toward low complexity. Positions 789 to 798 (GAVPPPPPPQ) are enriched in pro residues. 3 stretches are compositionally biased toward low complexity: residues 822 to 831 (MMQQQQQHIQ), 867 to 876 (PMQQNQHPQQ), and 902 to 911 (QQQQQQQQQQ). The span at 912–922 (MHRQNSLPQQF) shows a compositional bias: polar residues. The span at 923–935 (QGNQGVNPSGQQS) shows a compositional bias: low complexity. Residues 948 to 959 (TPRDQQHSQSPP) are compositionally biased toward polar residues.

Belongs to the ataxin-2 family. As to quaternary structure, interacts (via C-terminus) with szy-20 (via C-terminus); the interaction is RNA independent. Interacts with pab-1. Interacts with gdi-1. As to expression, expressed in the central nervous system, dorsal and ventral nerve cord, intestinal lining and body-wall muscle. Expressed in the gonad.

Its subcellular location is the cytoplasm. The protein resides in the nucleus. Functionally, probable RNA-binding protein that negatively regulates the translation of targets. Functions with RNA-binding protein szy-20 to ensure embryonic cell division, and to this end, plays a role in the regulation of centrosome assembly, position and size, and in astral microtubule outgrowth and nucleation. Required for gonad development, germ cell proliferation and for the production of oocytes. Regulates whole body growth and fat accumulation in response to food availability, and this may be through the mTOR pathway, upstream of daf-15 and rheb-1. This chain is Ataxin-2 homolog, found in Caenorhabditis elegans.